A 201-amino-acid chain; its full sequence is Glycerol-3-phosphate acyltransferase (201 aa).

A run of 4 helical transmembrane segments spans residues 4-24, 84-104, 116-136, and 157-177; these read IASLVLAYLLGSVPFAVLVSL, EIAMVGLAVFIGHLWPVFLAF, VLLAVNPWLALIAAAVWLAVA, and AWFIEPGVYAGLTIVIALLLV.

The protein belongs to the PlsY family. As to quaternary structure, probably interacts with PlsX.

The protein resides in the cell inner membrane. The enzyme catalyses an acyl phosphate + sn-glycerol 3-phosphate = a 1-acyl-sn-glycero-3-phosphate + phosphate. It functions in the pathway lipid metabolism; phospholipid metabolism. In terms of biological role, catalyzes the transfer of an acyl group from acyl-phosphate (acyl-PO(4)) to glycerol-3-phosphate (G3P) to form lysophosphatidic acid (LPA). This enzyme utilizes acyl-phosphate as fatty acyl donor, but not acyl-CoA or acyl-ACP. This Laribacter hongkongensis (strain HLHK9) protein is Glycerol-3-phosphate acyltransferase.